Here is a 582-residue protein sequence, read N- to C-terminus: ATP-dependent lipid A-core flippase (582 aa).

5 helical membrane-spanning segments follow: residues 16-36 (LWPM…ALII), 63-83 (VLLW…ASGF), 153-173 (IIGL…ILIV), 253-273 (PIIQ…ASFP), and 275-295 (VMET…IALM). Residues 28 to 310 (AVAAIALIIN…LTNVNAQFQR (283 aa)) enclose the ABC transmembrane type-1 domain. Residues 342-578 (LEFRQVNFAY…NGAYAQLHRM (237 aa)) enclose the ABC transporter domain. 376–383 (GRSGSGKS) contributes to the ATP binding site.

This sequence belongs to the ABC transporter superfamily. Lipid exporter (TC 3.A.1.106) family. In terms of assembly, homodimer.

Its subcellular location is the cell inner membrane. It carries out the reaction ATP + H2O + lipid A-core oligosaccharideSide 1 = ADP + phosphate + lipid A-core oligosaccharideSide 2.. Involved in lipopolysaccharide (LPS) biosynthesis. Translocates lipid A-core from the inner to the outer leaflet of the inner membrane. Transmembrane domains (TMD) form a pore in the inner membrane and the ATP-binding domain (NBD) is responsible for energy generation. The protein is ATP-dependent lipid A-core flippase of Pectobacterium atrosepticum (strain SCRI 1043 / ATCC BAA-672) (Erwinia carotovora subsp. atroseptica).